A 390-amino-acid chain; its full sequence is Bibenzyl synthase (390 aa).

Cysteine 164 is an active-site residue.

The protein belongs to the thiolase-like superfamily. Chalcone/stilbene synthases family.

The enzyme catalyses 3-(3-hydroxyphenyl)-propanoyl-CoA + 3 malonyl-CoA + 3 H(+) = 3,3',5-trihydroxybibenzyl + 4 CO2 + 4 CoA. This chain is Bibenzyl synthase (BIBSY212), found in Phalaenopsis sp. (Moth orchid).